Reading from the N-terminus, the 1476-residue chain is ABC-type transporter frbG (1476 aa).

A run of 5 helical transmembrane segments spans residues 26 to 46 (LLFE…VLAL), 64 to 84 (LYYA…VQLI), 97 to 117 (SIAI…LCHL), 122 to 142 (SAKP…FDII), and 146 to 166 (TLWI…GLVL). N244 carries an N-linked (GlcNAc...) asparagine glycan. Helical transmembrane passes span 266 to 286 (FLAG…QPFL), 302 to 322 (AGAT…GIAI), 380 to 400 (LQTM…TWLL), and 409 to 429 (IPSV…AVMA). The region spanning 274–553 (LALTGFTFAQ…FVHSAVNLML (280 aa)) is the ABC transmembrane type-1 1 domain. The N-linked (GlcNAc...) asparagine glycan is linked to N464. 2 consecutive transmembrane segments (helical) span residues 487 to 507 (CLVF…IIGF) and 533 to 553 (IFAL…NLML). Residues 619 to 845 (IQARDTNIGW…VTAHVHNQTS (227 aa)) enclose the ABC transporter 1 domain. Residue 652-659 (GPTNSGKS) participates in ATP binding. 4 N-linked (GlcNAc...) asparagine glycosylation sites follow: N694, N776, N805, and N842. 5 consecutive transmembrane segments (helical) span residues 898–918 (AVFL…SIWV), 936–956 (YLLV…GGGS), 1017–1037 (LFAF…SPFV), 1121–1141 (LGLV…IVIV), and 1151–1171 (GFLG…GGFI). An ABC transmembrane type-1 2 domain is found at 898–1179 (AVFLALCMAL…FIGGWTGLET (282 aa)). One can recognise an ABC transporter 2 domain in the interval 1216–1447 (IVFDDVTASY…LSSSSPTSSP (232 aa)). The N-linked (GlcNAc...) asparagine glycan is linked to N1235. ATP is bound at residue 1250–1257 (GRTGSGKS).

The protein belongs to the ABC transporter superfamily. ABCC family. Conjugate transporter (TC 3.A.1.208) subfamily.

Its subcellular location is the cell membrane. Functionally, ABC-type transporter; part of the gene cluster that mediates the biosynthesis of the antifungal antibiotic FR901469, an inhibitor of beta-1,3-glucansynthase, exerting antifungal activity against the pathogenes Candida albicans and Aspergillus fumigatus. FR901469 is a cyclic depsipeptide containing 12 amino acid residues and a fatty acid chain. Probably involved in the secretion of FR901469. In Dothideomycetidae sp. (strain 11243) (Fungal sp. (strain No.11243)), this protein is ABC-type transporter frbG.